The chain runs to 383 residues: MHTLHLIFEPRPKAPRLHALIVADAFQLPANPSRLLQTTKLECLAASMQRILSHYQPRVRTNHSVLSSRAVAQHLGSDNADPPRPETILYAQNHDPFGRKSSFLPRCADNGLCHADANPVSEVPESPPSTVKSSGDASVSDKDDDGLMDRCMLHDGAKGLLAVPRSKVQTSSGQVAETSPPQLSRKVIQNATSSSLYIKVERSKPSSRKRPSCIALETDEKASGPRIRARLGAKVQPSLGQVVEKFKRQATQHDTGSSMCIKPESARSKPIRRKRPAGAALETDEKASGPQTRARARAEASEASEASSPLPIARSARPYSAAEDDILQTLVARGLAWEEIEKEFGLRFAKRTMRSLQMRWSRKLKLTAPSTRCSKRKRSSASL.

Disordered regions lie at residues 118–145 (NPVS…KDDD) and 249–318 (QATQ…SARP). The span at 119–134 (PVSEVPESPPSTVKSS) shows a compositional bias: low complexity. The region spanning 318–364 (PYSAAEDDILQTLVARGLAWEEIEKEFGLRFAKRTMRSLQMRWSRKL) is the Myb-like domain.

Functionally, myb-like domain-containing protein; part of the subtelomeric hrmA-associated cluster (HAC) containing genes that alter the hyphal surface (such as reduced total chitin or increased beta-glucan exposure) and perturb inter-hyphal interactions within the developing biofilms, resulting in a loss of vertically aligned polarized growing filaments. Consequently, this hypoxia-typic morphotype (called H-MORPH) with altered biofilm architecture leads to increased hypoxia fitness, increased host inflammation, rapid disease progression, and mortality in a murine model of invasive aspergillosis. This is Subtelomeric hrmA-associated cluster protein AFUB_078970 from Aspergillus fumigatus (strain CBS 144.89 / FGSC A1163 / CEA10) (Neosartorya fumigata).